Consider the following 577-residue polypeptide: Steryl-sulfatase (577 aa).

An N-terminal signal peptide occupies residues 1–19 (MLWPCLLALLLSQLNFLCA). Residues 21–183 (RPGPGPNFLL…GTVFGSAQQV (163 aa)) are Lumenal-facing. Residues aspartate 34 and aspartate 35 each coordinate Ca(2+). Asparagine 46 carries N-linked (GlcNAc...) asparagine glycosylation. Ca(2+) is bound at residue cysteine 74. Cysteine 74 functions as the Nucleophile in the catalytic mechanism. 3-oxoalanine (Cys) is present on cysteine 74. The active site involves histidine 135. Cystine bridges form between cysteine 140-cysteine 147 and cysteine 169-cysteine 241. The helical transmembrane segment at 184-207 (FVVLPMNILGAVLLAMALARWAGL) threads the bilayer. Residues 208–211 (ARPP) are Cytoplasmic-facing. Residues 212-233 (GWVFGVTVAAMAAVGGAYVAFL) traverse the membrane as a helical segment. Topologically, residues 234–577 (YHFRPANCFL…PLACRCAGDG (344 aa)) are lumenal. N-linked (GlcNAc...) asparagine glycosylation occurs at asparagine 332. Positions 341 and 342 each coordinate Ca(2+). Intrachain disulfides connect cysteine 445-cysteine 488, cysteine 480-cysteine 486, and cysteine 561-cysteine 571. An N-linked (GlcNAc...) asparagine glycan is attached at asparagine 458.

It belongs to the sulfatase family. In terms of assembly, homodimer. Ca(2+) serves as cofactor. Post-translationally, the conversion to 3-oxoalanine (also known as C-formylglycine, FGly), of a serine or cysteine residue in prokaryotes and of a cysteine residue in eukaryotes, is critical for catalytic activity.

It localises to the microsome membrane. It is found in the endoplasmic reticulum membrane. It catalyses the reaction dehydroepiandrosterone 3-sulfate + H2O = 3beta-hydroxyandrost-5-en-17-one + sulfate + H(+). It carries out the reaction estrone 3-sulfate + H2O = estrone + sulfate + H(+). Catalyzes the conversion of sulfated steroid precursors, such as dehydroepiandrosterone sulfate (DHEA-S) and estrone sulfate to the free steroid. This chain is Steryl-sulfatase (Sts), found in Rattus norvegicus (Rat).